The primary structure comprises 490 residues: MARFGTQKLYIDGAYVDAGSDATFEAINPATGEVLAHVQRATQADVEKAVESAERGQKVWAAMTAMQRSRILRRAVDILRERNDELAMLETLDTGKSYSETRYVDIVTGADVLEYYAGLVPAIEGEQIPLRESSFVYTRREPLGVTVGIGAWNYPIQIALWKSAPALAAGNAMIFKPSEVTSLTTLKLAEIFTEAGLPNGVFNVLTGSGREVGTWLTEHPRIEKVSFTGGTTTGKKVMASASSSSLKEVTMELGGKSPLIICDDADLDKAADIAMMANFYSSGQVCTNGTRVFVPAAMKAAFEAKIAERVARIRAGNPEDENTNFGPLVSFQHMESVLSYIAKGKEEGARVLCGGERLTAGDFAKGAFVAPTVFTDCTDDMTIVKEEIFGPVMSILSYETEEEVIRRANDTEYGLAAGVCTNDISRAHRIIHKLEAGICWINAWGESPAEMPVGGYKQSGVGRENGVSSLAQYTRIKSVQVELGGYNSVF.

K(+) contacts are provided by I27 and D93. 150 to 152 (GAW) is an NAD(+) binding site. K162 (charge relay system) is an active-site residue. 176 to 179 (KPSE) serves as a coordination point for NAD(+). V180 contacts K(+). 230–233 (GTTT) contributes to the NAD(+) binding site. A K(+)-binding site is contributed by L246. Catalysis depends on E252, which acts as the Proton acceptor. NAD(+)-binding residues include G254, C286, and E387. C286 serves as the catalytic Nucleophile. At C286 the chain carries Cysteine sulfenic acid (-SOH). K457 and G460 together coordinate K(+). Residue E464 is the Charge relay system of the active site.

This sequence belongs to the aldehyde dehydrogenase family. In terms of assembly, dimer of dimers. K(+) serves as cofactor.

The catalysed reaction is betaine aldehyde + NAD(+) + H2O = glycine betaine + NADH + 2 H(+). It functions in the pathway amine and polyamine biosynthesis; betaine biosynthesis via choline pathway; betaine from betaine aldehyde: step 1/1. Involved in the biosynthesis of the osmoprotectant glycine betaine. Catalyzes the irreversible oxidation of betaine aldehyde to the corresponding acid. The protein is Betaine aldehyde dehydrogenase of Pseudomonas entomophila (strain L48).